The chain runs to 155 residues: Interleukin-2 (155 aa).

An N-terminal signal peptide occupies residues 1–20 (MYKIQLLSCIALTLALVANG). A glycan (O-linked (GalNAc...) threonine) is linked at threonine 23. Cysteine 79 and cysteine 127 are oxidised to a cystine.

This sequence belongs to the IL-2 family.

It is found in the secreted. Its function is as follows. Cytokine produced by activated CD4-positive helper T-cells and to a lesser extend activated CD8-positive T-cells and natural killer (NK) cells that plays pivotal roles in the immune response and tolerance. Binds to a receptor complex composed of either the high-affinity trimeric IL-2R (IL2RA/CD25, IL2RB/CD122 and IL2RG/CD132) or the low-affinity dimeric IL-2R (IL2RB and IL2RG). Interaction with the receptor leads to oligomerization and conformation changes in the IL-2R subunits resulting in downstream signaling starting with phosphorylation of JAK1 and JAK3. In turn, JAK1 and JAK3 phosphorylate the receptor to form a docking site leading to the phosphorylation of several substrates including STAT5. This process leads to activation of several pathways including STAT, phosphoinositide-3-kinase/PI3K and mitogen-activated protein kinase/MAPK pathways. Functions as a T-cell growth factor and can increase NK-cell cytolytic activity as well. Promotes strong proliferation of activated B-cells and subsequently immunoglobulin production. Plays a pivotal role in regulating the adaptive immune system by controlling the survival and proliferation of regulatory T-cells, which are required for the maintenance of immune tolerance. Moreover, participates in the differentiation and homeostasis of effector T-cell subsets, including Th1, Th2, Th17 as well as memory CD8-positive T-cells. The chain is Interleukin-2 (IL2) from Bos taurus (Bovine).